Reading from the N-terminus, the 177-residue chain is RNA pyrophosphohydrolase (177 aa).

Residues Gly-6 to Lys-149 enclose the Nudix hydrolase domain. Residues Gly-38 to Gly-59 carry the Nudix box motif.

This sequence belongs to the Nudix hydrolase family. RppH subfamily. The cofactor is a divalent metal cation.

In terms of biological role, accelerates the degradation of transcripts by removing pyrophosphate from the 5'-end of triphosphorylated RNA, leading to a more labile monophosphorylated state that can stimulate subsequent ribonuclease cleavage. This is RNA pyrophosphohydrolase from Cronobacter sakazakii (strain ATCC BAA-894) (Enterobacter sakazakii).